The sequence spans 81 residues: Small ribosomal subunit protein bS16 (81 aa).

The protein belongs to the bacterial ribosomal protein bS16 family.

The chain is Small ribosomal subunit protein bS16 from Neisseria meningitidis serogroup C (strain 053442).